A 71-amino-acid polypeptide reads, in one-letter code: Large ribosomal subunit protein bL31 (71 aa).

Zn(2+)-binding residues include cysteine 16, cysteine 18, cysteine 37, and cysteine 40.

The protein belongs to the bacterial ribosomal protein bL31 family. Type A subfamily. As to quaternary structure, part of the 50S ribosomal subunit. Zn(2+) serves as cofactor.

Its function is as follows. Binds the 23S rRNA. In Marinomonas sp. (strain MWYL1), this protein is Large ribosomal subunit protein bL31.